An 811-amino-acid chain; its full sequence is TLR4 interactor with leucine rich repeats (811 aa).

Residues 1–25 (MEGVGAVRFWLVVCGCLAFPPRAES) form the signal peptide. The LRRNT domain occupies 26–57 (VCPERCDCQHPQHLLCTNRGLRAVPKTSSLPS). At 26–696 (VCPERCDCQH…AGGRGGVDYQ (671 aa)) the chain is on the extracellular side. 12 LRR repeats span residues 61–81 (VLTYSLGGNFITNITAFDFHR), 84–105 (QLRRLDLQYNQIRSLHPKTFEK), 108–129 (RLEELYLGNNLLQALAPGTLAP), 132–153 (KLRILYANGNEIGRLSRGSFEG), 156–177 (SLVKLRLDGNVLGALPDAVFAP), 180–201 (NLLYLHLEANRIRFLGKNAFTQ), 204–223 (KLRFLNLSANELQPSLRHAA), 230–251 (SLSTLILSANSLQHLGPRVFQH), 254–275 (RLGLLSLSGNQLTHLAPEAFWG), 278–298 (ALRELRLEGNRLNQLPLTLLE), 302–323 (SLEALDLSGNELSALHPATFGH), and 326–347 (RLRELSLRDNALSALSGDIFAA). N-linked (GlcNAc...) asparagine glycosylation occurs at N73. The LRRCT domain maps to 359 to 416 (NGWTCDCRLRGLKRWMGNWHSQGRLLTVFVQCRHPPALRGKYLDYLDDQLLQNGSCVD). Residue N411 is glycosylated (N-linked (GlcNAc...) asparagine). 2 disordered regions span residues 414-460 (CVDP…QQRG) and 486-562 (RRGP…QQGR). The segment covering 421-430 (PTAGSRQWPI) has biased composition (polar residues). 2 stretches are compositionally biased toward low complexity: residues 440–460 (PPAGLAQELPLQPQPQPQQRG) and 494–508 (QSPSAAAASGSAPQS). Basic and acidic residues predominate over residues 510 to 519 (DLHEKPERGR). Residues 524–545 (NLPQTEPTPTSEPASGTPSARD) show a composition bias toward polar residues. N-linked (GlcNAc...) asparagine glycosylation is present at N589. Residues 697–717 (LLTLVLLAINALLVLLALAAW) form a helical membrane-spanning segment. At 718–809 (GSRWLRRKLR…RREDHLLQRF (92 aa)) the chain is on the cytoplasmic side. The residue at position 798 (S798) is a Phosphoserine.

Belongs to the lipopolysaccharide (LPS) receptor, a multi-protein complex containing at least CD14, MD-2 and TLR4. Interacts with TLR4; this interaction is greatly enhanced following LPS stimulation. Interacts with LPS. In terms of processing, N-glycolysaled. In terms of tissue distribution, highly expressed in cortical astrocytes and in cerebellar granule neurons.

The protein localises to the membrane. Component of the TLR4 signaling complex. Mediates the innate immune response to bacterial lipopolysaccharide (LPS) leading to cytokine secretion and the inflammatory response. In Rattus norvegicus (Rat), this protein is TLR4 interactor with leucine rich repeats (Tril).